The following is a 107-amino-acid chain: NADH-quinone oxidoreductase subunit K (107 aa).

Helical transmembrane passes span 9–29 (IGVN…MFAV), 36–56 (IVIL…FLTF), and 68–88 (FSLF…AIVI).

It belongs to the complex I subunit 4L family. NDH-1 is composed of 14 different subunits. Subunits NuoA, H, J, K, L, M, N constitute the membrane sector of the complex.

The protein localises to the cell inner membrane. It catalyses the reaction a quinone + NADH + 5 H(+)(in) = a quinol + NAD(+) + 4 H(+)(out). NDH-1 shuttles electrons from NADH, via FMN and iron-sulfur (Fe-S) centers, to quinones in the respiratory chain. The immediate electron acceptor for the enzyme in this species is believed to be a menaquinone. Couples the redox reaction to proton translocation (for every two electrons transferred, four hydrogen ions are translocated across the cytoplasmic membrane), and thus conserves the redox energy in a proton gradient. The protein is NADH-quinone oxidoreductase subunit K of Chlorobaculum tepidum (strain ATCC 49652 / DSM 12025 / NBRC 103806 / TLS) (Chlorobium tepidum).